We begin with the raw amino-acid sequence, 411 residues long: 2,3-bisphosphoglycerate-independent phosphoglycerate mutase (411 aa).

Belongs to the BPG-independent phosphoglycerate mutase family. A-PGAM subfamily.

It catalyses the reaction (2R)-2-phosphoglycerate = (2R)-3-phosphoglycerate. It functions in the pathway carbohydrate degradation; glycolysis; pyruvate from D-glyceraldehyde 3-phosphate: step 3/5. Its function is as follows. Catalyzes the interconversion of 2-phosphoglycerate and 3-phosphoglycerate. This chain is 2,3-bisphosphoglycerate-independent phosphoglycerate mutase, found in Thermococcus gammatolerans (strain DSM 15229 / JCM 11827 / EJ3).